The following is a 720-amino-acid chain: Nucleolar protein 11 (720 aa).

The tract at residues 365–392 (KDPETKPSNAGAQKKTRERKTNANAGNG) is disordered.

The protein resides in the nucleus. Its subcellular location is the nucleolus. Ribosome biogenesis factor. May be required for both optimal rDNA transcription and pre-rRNA processing. The sequence is that of Nucleolar protein 11 (nol11) from Xenopus laevis (African clawed frog).